A 100-amino-acid polypeptide reads, in one-letter code: Small ribosomal subunit protein uS14 (100 aa).

The protein belongs to the universal ribosomal protein uS14 family. Part of the 30S ribosomal subunit. Contacts proteins S3 and S10.

Its function is as follows. Binds 16S rRNA, required for the assembly of 30S particles and may also be responsible for determining the conformation of the 16S rRNA at the A site. In Prochlorococcus marinus (strain MIT 9211), this protein is Small ribosomal subunit protein uS14.